The chain runs to 150 residues: UPF0178 protein Bcep1808_1605 (150 aa).

It belongs to the UPF0178 family.

This Burkholderia vietnamiensis (strain G4 / LMG 22486) (Burkholderia cepacia (strain R1808)) protein is UPF0178 protein Bcep1808_1605.